Consider the following 696-residue polypeptide: DNA ligase (696 aa).

Residues 43 to 47, 92 to 93, and Glu-122 contribute to the NAD(+) site; these read DGEFD and SL. Lys-124 serves as the catalytic N6-AMP-lysine intermediate. NAD(+) is bound by residues Arg-145, Glu-185, Lys-301, and Lys-325. 4 residues coordinate Zn(2+): Cys-419, Cys-422, Cys-438, and Cys-444. Residues 608–696 enclose the BRCT domain; the sequence is SIPRNLEGLS…GPDAVAESGV (89 aa).

The protein belongs to the NAD-dependent DNA ligase family. LigA subfamily. The cofactor is Mg(2+). Requires Mn(2+) as cofactor.

The catalysed reaction is NAD(+) + (deoxyribonucleotide)n-3'-hydroxyl + 5'-phospho-(deoxyribonucleotide)m = (deoxyribonucleotide)n+m + AMP + beta-nicotinamide D-nucleotide.. Functionally, DNA ligase that catalyzes the formation of phosphodiester linkages between 5'-phosphoryl and 3'-hydroxyl groups in double-stranded DNA using NAD as a coenzyme and as the energy source for the reaction. It is essential for DNA replication and repair of damaged DNA. This chain is DNA ligase, found in Rhodococcus jostii (strain RHA1).